A 101-amino-acid chain; its full sequence is Urease subunit beta (101 aa).

The protein belongs to the urease beta subunit family. In terms of assembly, heterotrimer of UreA (gamma), UreB (beta) and UreC (alpha) subunits. Three heterotrimers associate to form the active enzyme.

Its subcellular location is the cytoplasm. The enzyme catalyses urea + 2 H2O + H(+) = hydrogencarbonate + 2 NH4(+). It participates in nitrogen metabolism; urea degradation; CO(2) and NH(3) from urea (urease route): step 1/1. The sequence is that of Urease subunit beta from Burkholderia orbicola (strain MC0-3).